We begin with the raw amino-acid sequence, 156 residues long: Small ribosomal subunit protein uS7 (156 aa).

Belongs to the universal ribosomal protein uS7 family. As to quaternary structure, part of the 30S ribosomal subunit. Contacts proteins S9 and S11.

Functionally, one of the primary rRNA binding proteins, it binds directly to 16S rRNA where it nucleates assembly of the head domain of the 30S subunit. Is located at the subunit interface close to the decoding center, probably blocks exit of the E-site tRNA. The protein is Small ribosomal subunit protein uS7 of Sorangium cellulosum (strain So ce56) (Polyangium cellulosum (strain So ce56)).